A 379-amino-acid polypeptide reads, in one-letter code: Queuine tRNA-ribosyltransferase (379 aa).

The active-site Proton acceptor is the aspartate 93. Substrate-binding positions include 93–97 (DSGGF), aspartate 147, glutamine 191, and glycine 218. An RNA binding region spans residues 249–255 (GVGKPED). The active-site Nucleophile is the aspartate 268. The RNA binding; important for wobble base 34 recognition stretch occupies residues 273-277 (TRNAR). Zn(2+) is bound by residues cysteine 306, cysteine 308, cysteine 311, and histidine 337.

It belongs to the queuine tRNA-ribosyltransferase family. In terms of assembly, homodimer. Within each dimer, one monomer is responsible for RNA recognition and catalysis, while the other monomer binds to the replacement base PreQ1. The cofactor is Zn(2+).

The catalysed reaction is 7-aminomethyl-7-carbaguanine + guanosine(34) in tRNA = 7-aminomethyl-7-carbaguanosine(34) in tRNA + guanine. Its pathway is tRNA modification; tRNA-queuosine biosynthesis. Functionally, catalyzes the base-exchange of a guanine (G) residue with the queuine precursor 7-aminomethyl-7-deazaguanine (PreQ1) at position 34 (anticodon wobble position) in tRNAs with GU(N) anticodons (tRNA-Asp, -Asn, -His and -Tyr). Catalysis occurs through a double-displacement mechanism. The nucleophile active site attacks the C1' of nucleotide 34 to detach the guanine base from the RNA, forming a covalent enzyme-RNA intermediate. The proton acceptor active site deprotonates the incoming PreQ1, allowing a nucleophilic attack on the C1' of the ribose to form the product. After dissociation, two additional enzymatic reactions on the tRNA convert PreQ1 to queuine (Q), resulting in the hypermodified nucleoside queuosine (7-(((4,5-cis-dihydroxy-2-cyclopenten-1-yl)amino)methyl)-7-deazaguanosine). The polypeptide is Queuine tRNA-ribosyltransferase (Mannheimia succiniciproducens (strain KCTC 0769BP / MBEL55E)).